The primary structure comprises 398 residues: MGFSLLNFTGDPFAISTVSFGIMSWVVAIAGAASSKQQTFPHFSWWGISYQIVIILIIFVLYANNNIELYKFTLVGLVSIAFIYTTNSTNNLIYNSNSPGNLCCAAGCILLSILNLIWILYFGGHPESPTNQFIDSFSIRGQGHEQLGSGSHNHNHNLNNANTNTNTNMPLGGGNGIIGKSELSPYDDRFASPINISGGTNQPTSESLRLASVGQMGNGPFSNTTGNPNLQQPLTGSFGGSTNHTPTNANTNTNTTTTNNNNNNTGYMTSSHLTGLENFSSPNVPNNGIGLTRDLTHNSNSLNNNSHNGATGSINNSNNTNKRNTIYTDSETGTGITFRYKAKALYSYDANPDDINEISFVKDEILEVDDIDGKWWQARRANGQVGICPSNYVKLLDT.

Residues 1-12 are Cytoplasmic-facing; that stretch reads MGFSLLNFTGDP. The helical transmembrane segment at 13–33 threads the bilayer; sequence FAISTVSFGIMSWVVAIAGAA. Over 34–42 the chain is Extracellular; that stretch reads SSKQQTFPH. The chain crosses the membrane as a helical span at residues 43 to 63; sequence FSWWGISYQIVIILIIFVLYA. The Cytoplasmic segment spans residues 64 to 65; the sequence is NN. A helical membrane pass occupies residues 66–86; the sequence is NIELYKFTLVGLVSIAFIYTT. Residues 87–101 are Extracellular-facing; it reads NSTNNLIYNSNSPGN. The chain crosses the membrane as a helical span at residues 102–122; sequence LCCAAGCILLSILNLIWILYF. Over 123 to 398 the chain is Cytoplasmic; it reads GGHPESPTNQ…PSNYVKLLDT (276 aa). 2 disordered regions span residues 145–167 and 213–327; these read EQLG…NTNT and VGQM…NTIY. Positions 156–167 are enriched in low complexity; that stretch reads HNLNNANTNTNT. A compositionally biased stretch (polar residues) spans 220–235; that stretch reads PFSNTTGNPNLQQPLT. The segment covering 242-265 has biased composition (low complexity); that stretch reads TNHTPTNANTNTNTTTTNNNNNNT. The segment covering 266–286 has biased composition (polar residues); that stretch reads GYMTSSHLTGLENFSSPNVPN. Residues 297-326 are compositionally biased toward low complexity; it reads HNSNSLNNNSHNGATGSINNSNNTNKRNTI. Residues 337-398 form the SH3 domain; sequence TFRYKAKALY…PSNYVKLLDT (62 aa).

The protein belongs to the SHO1 family. In terms of assembly, forms homooligomers.

It is found in the cell membrane. Functionally, plasma membrane osmosensor that activates the high osmolarity glycerol (HOG) MAPK signaling pathway in response to high osmolarity. This is High osmolarity signaling protein SHO1 (SHO1) from Candida dubliniensis (strain CD36 / ATCC MYA-646 / CBS 7987 / NCPF 3949 / NRRL Y-17841) (Yeast).